Reading from the N-terminus, the 423-residue chain is FAD-dependent monooxygenase asL6 (423 aa).

FAD-binding positions include 10-13, 34-35, arginine 108, tyrosine 290, and aspartate 312; these read AGVA and ER. Residues 371 to 391 traverse the membrane as a helical segment; the sequence is GMGMFQSKFGVGVFYVLLAII.

Belongs to the aromatic-ring hydroxylase family. Requires FAD as cofactor.

The protein localises to the membrane. It functions in the pathway secondary metabolite biosynthesis; terpenoid biosynthesis. Its function is as follows. FAD-dependent monooxygenase; part of the gene cluster that mediates the biosynthesis of xenovulene A, an unusual meroterpenoid that has potent inhibitory effects on the human gamma-aminobutyrate A (GABAA) benzodiazepine receptor. The first step of xenovulene A biosynthesis is the biosynthesis of 3-methylorcinaldehyde performed by the non-reducing polyketide synthase aspks1. The salicylate hydroxylase asL1 then catalyzes the oxidative dearomatization of 3-methylorcinaldehyde to yield a dearomatized hydroxycyclohexadione. The 2-oxoglutarate-dependent dioxygenase asL3 further catalyzes the oxidative ring expansion to provide the first tropolone metabolite. The cytochrome P450 monooxygenase asR2 allows the synthesis of tropolone hemiacetal. In parallel, a previously unrecognised class of terpene cyclase, asR6, produces alpha-humulene from farnesylpyrophosphate (FPP). The putative Diels-Alderase asR5 probably catalyzes the formation of the tropolone-humulene skeleton by linking humulene and the polyketide moiety. Oxidative-ring contractions catalyzed by asL4 and asL6 then processively remove carbon atoms from the polyketide to yield xenovulene A. The polypeptide is FAD-dependent monooxygenase asL6 (Sarocladium schorii (Acremonium strictum (strain IMI 501407))).